The primary structure comprises 366 residues: MKFLVLLVALLLWPSSLPAYRRVTVTPDEEQNLNHYVQVLQNLILSVPTKEPGRQKKSKSPNNANFIGPRVSRVKELKYTHDVGPGDNDVLINPVSEETTTFPTRGFTLEIDKKKRTKSTAFWSIKPSNVSVVLHAKEPFIEKDEPEPEPEPEPEPEPVEHRTGAPTQVPSVTEPSQDVTSLSGSTDLGTATEEEDVPQLSGDNEMDYLESHDMYNEDVLKRIADINSQLHHVPLPESYKPEYRADIRASKEHLKRSLALAIAAEHKLEKMYKSQMLPQGRSSGGVYDIITVINMLYNSRYKLSEYLDIKYVPLEMRGKATVVVHTLKRILCVGHGEETHNLLKQLLNNNIRILHILDTHDKDDSS.

An N-terminal signal peptide occupies residues 1–18; it reads MKFLVLLVALLLWPSSLP. Asn-129 is a glycosylation site (N-linked (GlcNAc...) asparagine). Positions 139–204 are disordered; that stretch reads PFIEKDEPEP…EDVPQLSGDN (66 aa). Residues 144–157 are compositionally biased toward acidic residues; it reads DEPEPEPEPEPEPE. Residues 165–189 show a composition bias toward polar residues; sequence APTQVPSVTEPSQDVTSLSGSTDLG.

The protein belongs to the SPESP1 family. Glycosylated. In testis there are two predominant forms of 77- and 67-kDa and a form of 47-kDa, whereas in epididymal sperm from caput, corpus, and cauda there are two forms of 47- and 43-kDa. Testis forms contain complex carbohydrate residues. Epididymal sperm forms are N-glycosylated. Then undergoes significant glycosylation in the testis and that the majority of these glycoconjugates are removed by the time sperm reach the caput epididymis.

It localises to the cytoplasmic vesicle. It is found in the secretory vesicle. Its subcellular location is the acrosome. In terms of biological role, involved in fertilization ability of sperm. This chain is Sperm equatorial segment protein 1, found in Bos taurus (Bovine).